Reading from the N-terminus, the 485-residue chain is MELEVRRVRQAFLSGRSRPLRFRLQQLEALRRMVQEREKDILAAIAADLCKSEFNVYSQEVITVLGEIDFMLENLPEWVTAKPVKKNVLTMLDEAYIQPQPLGVVLIIGAWNYPFVLTIQPLIGAIAAGNAVIIKPSELSENTAKMLAKLLPQYLDQDLYIVINGGVEETTELLKQRFDHIFYTGNTAVGKIVMEAAAKHLTPVTLELGGKSPCYIDKDCDLDIVCRRITWGKYMNCGQTCIAPDYILCEASLQNQIVWKIKETVKEFYGENIKESPDYERIINLRHFKRILSLLEGQKIAFGGETDEATRYIAPTVLTDVDPKTKVMQEEIFGPILPIVPVKNVDEAINFINEREKPLALYVFSHNHKLIKRMIDETSSGGVTGNDVIMHFMLNSFPFGGVGSSGMGAYHGKHSFDTFSHQRPCLLKSLKREGANKLRYPPNSQSKVDWGKFFLLKRFNKEKLGLLLLTFLGIVAAVLVKAEYY.

Residues 1–463 (MELEVRRVRQ…FLLKRFNKEK (463 aa)) lie on the Cytoplasmic side of the membrane. 185-190 (GNTAVG) is a binding site for NAD(+). Catalysis depends on residues Glu207 and Cys241. Residue Ser293 is modified to Phosphoserine. The chain crosses the membrane as a helical span at residues 464-484 (LGLLLLTFLGIVAAVLVKAEY). The Prevents secretion from ER motif lies at 481–484 (KAEY).

This sequence belongs to the aldehyde dehydrogenase family. In terms of assembly, homodimer.

It is found in the microsome membrane. The protein resides in the endoplasmic reticulum membrane. The enzyme catalyses an aldehyde + NAD(+) + H2O = a carboxylate + NADH + 2 H(+). The catalysed reaction is a fatty aldehyde + NAD(+) + H2O = a fatty acid + NADH + 2 H(+). It carries out the reaction (2E)-hexadecenal + NAD(+) + H2O = (E)-hexadec-2-enoate + NADH + 2 H(+). It catalyses the reaction hexadecanoate + NADH + 2 H(+) = hexadecanal + NAD(+) + H2O. The enzyme catalyses 22-oxodocosanoate + NAD(+) + H2O = docosanedioate + NADH + 2 H(+). The catalysed reaction is 2,6,10,14-tetramethylpentadecanal + NAD(+) + H2O = 2,6,10,14-tetramethylpentadecanoate + NADH + 2 H(+). It carries out the reaction octadecanal + NAD(+) + H2O = octadecanoate + NADH + 2 H(+). It catalyses the reaction dodecanoate + NADH + 2 H(+) = dodecanal + NAD(+) + H2O. The enzyme catalyses decanal + NAD(+) + H2O = decanoate + NADH + 2 H(+). The catalysed reaction is tetradecanal + NAD(+) + H2O = tetradecanoate + NADH + 2 H(+). It carries out the reaction octanal + NAD(+) + H2O = octanoate + NADH + 2 H(+). It catalyses the reaction heptanal + NAD(+) + H2O = heptanoate + NADH + 2 H(+). The enzyme catalyses (2E,6E)-farnesal + NAD(+) + H2O = (2E,6E)-farnesoate + NADH + 2 H(+). Catalyzes the oxidation of medium and long-chain aliphatic aldehydes to fatty acids. Active on a variety of saturated and unsaturated aliphatic aldehydes between 6 and 24 carbons in length. Responsible for conversion of the sphingosine 1-phosphate (S1P) degradation product hexadecenal to hexadecenoic acid. The protein is Aldehyde dehydrogenase family 3 member A2 (ALDH3A2) of Pongo abelii (Sumatran orangutan).